Here is a 291-residue protein sequence, read N- to C-terminus: RPE-retinal G protein-coupled receptor (291 aa).

Over 1–15 (MAETSALPTGFGELE) the chain is Extracellular. Residues 16 to 36 (VLAVGMVLLVEALSGLSLNTL) form a helical membrane-spanning segment. The Cytoplasmic portion of the chain corresponds to 37 to 52 (TIFSFCKTPELRTPCH). A helical membrane pass occupies residues 53 to 73 (LLVLSLALADSGISLNALVAA). The Extracellular portion of the chain corresponds to 74–91 (TSSLLRRWPYGSDGCQAH). A disulfide bridge links C88 with C162. The helical transmembrane segment at 92–112 (GFQGFVTALASICSSAAIAWG) threads the bilayer. Topologically, residues 113–130 (RYHHYCTRSQLAWNSAVS) are cytoplasmic. Residues 131-151 (LVLFVWLSSAFWAALPLLGWG) form a helical membrane-spanning segment. The Extracellular segment spans residues 152 to 175 (HYDYEPLGTCCTLDYSKGDRNFTS). A glycan (N-linked (GlcNAc...) asparagine) is linked at N172. A helical membrane pass occupies residues 176 to 196 (FLFTMSFFNFAMPLFITITSY). At 197-219 (SLMEQKLGKSGHLQVNTTLPART) the chain is on the cytoplasmic side. Residues 220–240 (LLLGWGPYAILYLYAVIADVT) traverse the membrane as a helical segment. Over 241–247 (SISPKLQ) the chain is Extracellular. A helical membrane pass occupies residues 248 to 268 (MVPALIAKMVPTINAINYALG). Residue K255 is modified to N6-(retinylidene)lysine. The Cytoplasmic portion of the chain corresponds to 269–291 (NEMVCRGIWQCLSPQKREKDRTK).

This sequence belongs to the G-protein coupled receptor 1 family. Opsin subfamily. In terms of processing, covalently binds all-trans- and 11-cis-retinal. In terms of tissue distribution, preferentially expressed at high levels in the retinal pigment epithelium (RPE) and Mueller cells of the neural retina.

It is found in the membrane. Its function is as follows. Receptor for all-trans- and 11-cis-retinal. Binds preferentially to the former and may catalyze the isomerization of the chromophore by a retinochrome-like mechanism. This Homo sapiens (Human) protein is RPE-retinal G protein-coupled receptor (RGR).